We begin with the raw amino-acid sequence, 209 residues long: Thymidine kinase (209 aa).

ATP is bound by residues 9–16 (SAMNAGKT) and 88–91 (DEAQ). Residue Glu-89 is the Proton acceptor of the active site.

This sequence belongs to the thymidine kinase family. In terms of assembly, homotetramer.

It is found in the cytoplasm. The enzyme catalyses thymidine + ATP = dTMP + ADP + H(+). This chain is Thymidine kinase, found in Xanthomonas axonopodis pv. citri (strain 306).